Reading from the N-terminus, the 212-residue chain is Redox-sensing transcriptional repressor Rex (212 aa).

The segment at residues 17 to 56 is a DNA-binding region (H-T-H motif); the sequence is LYARSLRYLLEEGIHSVSSQELGERINVTAAQIRKDLSYF. 91–96 serves as a coordination point for NAD(+); it reads GIGLLG.

The protein belongs to the transcriptional regulatory Rex family. In terms of assembly, homodimer.

It is found in the cytoplasm. Its function is as follows. Modulates transcription in response to changes in cellular NADH/NAD(+) redox state. This Chloroflexus aggregans (strain MD-66 / DSM 9485) protein is Redox-sensing transcriptional repressor Rex.